The primary structure comprises 401 residues: Argininosuccinate synthase (401 aa).

Residues 7-15 and Ala34 contribute to the ATP site; that span reads AYSGGLDTS. L-citrulline contacts are provided by Tyr85 and Ser90. ATP is bound at residue Gly115. L-aspartate-binding residues include Thr117, Asn121, and Asp122. Asn121 provides a ligand contact to L-citrulline. L-citrulline contacts are provided by Arg125, Ser174, Ser183, Glu259, and Tyr271.

It belongs to the argininosuccinate synthase family. Type 1 subfamily. In terms of assembly, homotetramer.

Its subcellular location is the cytoplasm. It catalyses the reaction L-citrulline + L-aspartate + ATP = 2-(N(omega)-L-arginino)succinate + AMP + diphosphate + H(+). The protein operates within amino-acid biosynthesis; L-arginine biosynthesis; L-arginine from L-ornithine and carbamoyl phosphate: step 2/3. The sequence is that of Argininosuccinate synthase from Desulfitobacterium hafniense (strain DSM 10664 / DCB-2).